Here is a 351-residue protein sequence, read N- to C-terminus: uncharacterized protein (351 aa).

The N-terminal stretch at 1-32 (MKNKKRVFIASSLSCVLLLLSAANTEANSANK) is a signal peptide. Residues 26 to 74 (EANSANKDSQDQTKKEHVDKAQQKEKRNVNDKDKNTPGPDDIGKNGKVT) form a disordered region. Positions 33–60 (DSQDQTKKEHVDKAQQKEKRNVNDKDKN) are enriched in basic and acidic residues.

This sequence belongs to the aerolysin family.

This is an uncharacterized protein from Staphylococcus aureus (strain MRSA252).